Here is a 97-residue protein sequence, read N- to C-terminus: Large ribosomal subunit protein uL23 (97 aa).

This sequence belongs to the universal ribosomal protein uL23 family. As to quaternary structure, part of the 50S ribosomal subunit. Contacts protein L29, and trigger factor when it is bound to the ribosome.

In terms of biological role, one of the early assembly proteins it binds 23S rRNA. One of the proteins that surrounds the polypeptide exit tunnel on the outside of the ribosome. Forms the main docking site for trigger factor binding to the ribosome. The polypeptide is Large ribosomal subunit protein uL23 (Sinorhizobium fredii (strain NBRC 101917 / NGR234)).